Reading from the N-terminus, the 133-residue chain is MKLQIPAGKANPAPPVGPALGQAGVNIMAFCKEFNARTADQAGLIIPVEITVFEDRSFTFITKTPPAAVLLKKAAGIESGSGEPNRNKVATIKRDKVREIAELKMPDLNAASIEAAMRMIEGTARSMGIVVED.

Belongs to the universal ribosomal protein uL11 family. In terms of assembly, part of the ribosomal stalk of the 50S ribosomal subunit. Interacts with L10 and the large rRNA to form the base of the stalk. L10 forms an elongated spine to which 2 L12 dimers bind in a sequential fashion forming a pentameric L10(L12)2(L12)2 complex. In terms of processing, one or more lysine residues are methylated.

Its function is as follows. Forms part of the ribosomal stalk which helps the ribosome interact with GTP-bound translation factors. The protein is Large ribosomal subunit protein uL11 of Geobacillus stearothermophilus (Bacillus stearothermophilus).